A 490-amino-acid chain; its full sequence is MGKKRKLDSKSPAAARSAAARAAAAAAAAAAAAAVAEPSSQPEALAEDPAPSSQPLGLSSEGAGERMMSREAGGGEEEEVEEVEVEEEVEVDEDEDGEGEGEEEEEAAERDADSIQALLNSFPKDQLVELLSAAALSHEDVLTAVHRAADADPALRKIFVHGLGWDATAETLTEAFSAYGEIEDLRVVTDRATGKCKGYGFILFSRRSGARAALREPQKKIGNRTTACQLASVGPVPPGGMATNPAPAVAPAPAQLALPPVSEYTQRKIFVSNVGADIDPQKLLQFFSKYGEIEEGPLGLDKVTGKPKGFALFVYKTLDSAKKALQEPHKQFEGVVLHCQKAIDGPKPNKGGGLGGLYGAGTSGGRKGAGGYGAHSHSLPGAAVGGHVMPSPVSSLTSLPGVAGGPGVNPALGQALTAILASQGGGLGLNNILGVGANGSGLPNPGASAGLGSSGLPGMPGAGGYLGGYGGGGGYGSTPPGGPGRNYMGH.

Residues 1–112 form a disordered region; sequence MGKKRKLDSK…EEEEAAERDA (112 aa). Residues 13-36 are compositionally biased toward low complexity; the sequence is AAARSAAARAAAAAAAAAAAAAVA. The span at 74 to 108 shows a compositional bias: acidic residues; sequence GGEEEEVEEVEVEEEVEVDEDEDGEGEGEEEEEAA. 2 RRM domains span residues 156–233 and 267–343; these read RKIF…LASV and RKIF…QKAI.

In terms of assembly, forms homodimers. Interacts with RBP-L and RBP-208. Interacts with NSF.

It localises to the nucleus. Its subcellular location is the cytoplasm. RNA-binding protein that binds to a cis-localization element or zipcode, within the 5'-CDS of prolamine RNA. Binds strongly to glutelin mRNA, particularly to 3'-UTR and zipcode RNA. Recognizes and binds to glutelin zipcode RNA, which is required for proper mRNA localization to cisternal endoplasmic reticulum. Exhibits strong binding activity to a glutelin intron sequence and may participate in mRNA splicing. Required for the correct localization of glutelin and prolamine mRNA in endosperm cells during grain development. RBP-P and RBP-L form a quaternary complex with the membrane trafficking factors NSF and RAB5A. This quaternay complex carries glutelin mRNAs for active transport on endosomes to the cortical endoplasmic reticulum membrane, and enables endosome-mediated glutelin mRNA transport in endosperm cells. The sequence is that of RNA-binding protein P from Oryza sativa subsp. japonica (Rice).